Consider the following 681-residue polypeptide: Spermatogenesis-associated protein 21 (681 aa).

A compositionally biased stretch (basic and acidic residues) spans 1–14; that stretch reads MENRNTHTHPESKA. Disordered stretches follow at residues 1–284 and 298–336; these read MENR…ANSR and EEAT…VPTL. 2 stretches are compositionally biased toward polar residues: residues 83–94 and 159–173; these read QEPSARPRTTQD and PSNS…NSPS. Residues 251–261 are compositionally biased toward basic and acidic residues; the sequence is PEERDTEKKEL. Positions 264–281 are enriched in polar residues; sequence GQKQRQQALSAAGTQGPA. Residues 319–335 show a composition bias toward low complexity; that stretch reads TVTSVSTSGPISSSVPT. The EF-hand domain maps to 464-499; it reads FTPAQVEEALMSADVNGDGHVDFKDFLAVMTDTKRF. Positions 477, 479, 481, 483, and 488 each coordinate Ca(2+). The tract at residues 653-681 is disordered; sequence LFFQPGQQGSREHSSDSRKWLSSMPARTH. Positions 662–671 are enriched in basic and acidic residues; sequence SREHSSDSRK.

Involved in the differentiation of haploid spermatids. This chain is Spermatogenesis-associated protein 21 (Spata21), found in Mus musculus (Mouse).